A 76-amino-acid polypeptide reads, in one-letter code: UPF0346 protein LBUL_1194 (76 aa).

It belongs to the UPF0346 family.

In Lactobacillus delbrueckii subsp. bulgaricus (strain ATCC BAA-365 / Lb-18), this protein is UPF0346 protein LBUL_1194.